The primary structure comprises 489 residues: Rhamnulokinase (489 aa).

13–17 (ASSGR) is an ATP binding site. Cysteine 68 and cysteine 222 form a disulfide bridge. Substrate is bound by residues glycine 83 and 236–238 (HDT). Aspartate 237 functions as the Proton acceptor in the catalytic mechanism. Threonine 259 lines the ATP pocket. Asparagine 296 contacts substrate. Glutamine 304 provides a ligand contact to ATP. Residues cysteine 353 and cysteine 370 are joined by a disulfide bond. Glycine 402 contacts ATP. Cysteine 413 and cysteine 417 form a disulfide bridge.

The protein belongs to the rhamnulokinase family. In terms of assembly, monomer. It depends on Mg(2+) as a cofactor.

It catalyses the reaction L-rhamnulose + ATP = L-rhamnulose 1-phosphate + ADP + H(+). It functions in the pathway carbohydrate degradation; L-rhamnose degradation; glycerone phosphate from L-rhamnose: step 2/3. In terms of biological role, involved in the catabolism of L-rhamnose (6-deoxy-L-mannose). Catalyzes the transfer of the gamma-phosphate group from ATP to the 1-hydroxyl group of L-rhamnulose to yield L-rhamnulose 1-phosphate. The chain is Rhamnulokinase from Escherichia coli O7:K1 (strain IAI39 / ExPEC).